Reading from the N-terminus, the 291-residue chain is Basic helix-loop-helix protein 80 (291 aa).

The tract at residues 65–120 (SAVLDTSPSVDRKRKAAEDSAHSKDSCKDGKSRRGKKASKEVEEKSTTEDEPPKGY) is disordered. Residues 80-117 (AAEDSAHSKDSCKDGKSRRGKKASKEVEEKSTTEDEPP) are compositionally biased toward basic and acidic residues. The Nuclear localization signal signature appears at 125–132 (ARRGQATD). The basic motif; degenerate stretch occupies residues 129–142 (QATDSHSLAERVRR). The region spanning 129–179 (QATDSHSLAERVRRERISERMRMLQALVPGCDKVTGKALILDEIINYVQSL) is the bHLH domain. The helix-loop-helix motif stretch occupies residues 143-179 (ERISERMRMLQALVPGCDKVTGKALILDEIINYVQSL).

The protein belongs to the bHLH protein family. As to quaternary structure, homodimer. Interacts with IBH1, BC1 and LO9-177.

The protein localises to the nucleus. Its function is as follows. Together with BCL2, positive regulator of cell elongation at least partially through increased gibberellic acid (GA) biosynthesis. In Oryza sativa subsp. indica (Rice), this protein is Basic helix-loop-helix protein 80.